The sequence spans 407 residues: Elongation factor Tu (407 aa).

The 208-residue stretch at 10-217 (KPHVNVGTIG…ALDSYIPEPE (208 aa)) folds into the tr-type G domain. The segment at 19 to 26 (GHVDHGKT) is G1. GTP is bound at residue 19–26 (GHVDHGKT). Thr-26 lines the Mg(2+) pocket. The interval 60–64 (GITIA) is G2. A G3 region spans residues 81–84 (DCPG). Residues 81–85 (DCPGH) and 136–139 (NKAD) contribute to the GTP site. A G4 region spans residues 136–139 (NKAD). Positions 184-186 (SAL) are G5.

It belongs to the TRAFAC class translation factor GTPase superfamily. Classic translation factor GTPase family. EF-Tu/EF-1A subfamily. Monomer.

It localises to the cytoplasm. The enzyme catalyses GTP + H2O = GDP + phosphate + H(+). GTP hydrolase that promotes the GTP-dependent binding of aminoacyl-tRNA to the A-site of ribosomes during protein biosynthesis. In Saccharophagus degradans (strain 2-40 / ATCC 43961 / DSM 17024), this protein is Elongation factor Tu.